A 552-amino-acid chain; its full sequence is Threonylcarbamoyladenosine tRNA methylthiotransferase (552 aa).

A disordered region spans residues 31–61; it reads YENKKTVTVRAKKRSQIRLESQEEEEKPKPT. Positions 71–178 constitute an MTTase N-terminal domain; it reads QKVFVKTWGC…VVEVVEETLK (108 aa). Residues cysteine 80, cysteine 115, cysteine 144, cysteine 221, cysteine 225, and cysteine 228 each contribute to the [4Fe-4S] cluster site. A Radical SAM core domain is found at 207–438; the sequence is RKNPLIEIIS…DLFYSYEPYA (232 aa). Residues 438–500 enclose the TRAM domain; it reads ADRVGEIYTV…KFSMVGEILD (63 aa). The helical transmembrane segment at 532–552 threads the bilayer; it reads FGIALVLGSLAFLIQLVVRLL.

The protein belongs to the methylthiotransferase family. CDKAL1 subfamily. The cofactor is [4Fe-4S] cluster.

The protein localises to the membrane. It catalyses the reaction N(6)-L-threonylcarbamoyladenosine(37) in tRNA + (sulfur carrier)-SH + AH2 + 2 S-adenosyl-L-methionine = 2-methylsulfanyl-N(6)-L-threonylcarbamoyladenosine(37) in tRNA + (sulfur carrier)-H + 5'-deoxyadenosine + L-methionine + A + S-adenosyl-L-homocysteine + 2 H(+). Functionally, catalyzes the methylthiolation of N6-threonylcarbamoyladenosine (t(6)A), leading to the formation of 2-methylthio-N6-threonylcarbamoyladenosine (ms(2)t(6)A) at position 37 in tRNAs that read codons beginning with adenine. This is Threonylcarbamoyladenosine tRNA methylthiotransferase from Drosophila melanogaster (Fruit fly).